The chain runs to 121 residues: Large ribosomal subunit protein bL12 (121 aa).

This sequence belongs to the bacterial ribosomal protein bL12 family. As to quaternary structure, homodimer. Part of the ribosomal stalk of the 50S ribosomal subunit. Forms a multimeric L10(L12)X complex, where L10 forms an elongated spine to which 2 to 4 L12 dimers bind in a sequential fashion. Binds GTP-bound translation factors.

Forms part of the ribosomal stalk which helps the ribosome interact with GTP-bound translation factors. Is thus essential for accurate translation. This Mesomycoplasma hyopneumoniae (strain 7448) (Mycoplasma hyopneumoniae) protein is Large ribosomal subunit protein bL12.